The primary structure comprises 230 residues: UPF0758 protein Glov_0523 (230 aa).

The MPN domain occupies 108-230 (RFTSPAQVFD…YFSFVESGLL (123 aa)). Positions 179, 181, and 192 each coordinate Zn(2+). The JAMM motif signature appears at 179–192 (HNHPSGDPAPSRED).

It belongs to the UPF0758 family.

The sequence is that of UPF0758 protein Glov_0523 from Trichlorobacter lovleyi (strain ATCC BAA-1151 / DSM 17278 / SZ) (Geobacter lovleyi).